Consider the following 292-residue polypeptide: Ribonuclease HIII (292 aa).

Residues 76 to 292 enclose the RNase H type-2 domain; that stretch reads TNLIGTDEVG…TQKAMKIAQL (217 aa). Residues Asp82, Glu83, and Asp186 each contribute to the a divalent metal cation site.

This sequence belongs to the RNase HII family. RnhC subfamily. Mn(2+) serves as cofactor. Requires Mg(2+) as cofactor.

It localises to the cytoplasm. The enzyme catalyses Endonucleolytic cleavage to 5'-phosphomonoester.. Endonuclease that specifically degrades the RNA of RNA-DNA hybrids. This Lactococcus lactis subsp. cremoris (strain SK11) protein is Ribonuclease HIII.